The primary structure comprises 175 residues: MADPARARRLAKRITTIVASAIEYEIKDPGLVGVTITDAKVTADLHDATVYYTVMGPTLDGEPDYAAAAAALERAKGVLRTKVGAGTGVRFTPTLTFTRDVTSDTVHRMDELLARARAADADLARVRVGAKPAGEADPYRDRGSVDEPSDAGGLVIRTSDGLEAENTGDDYQAED.

The tract at residues 131 to 175 is disordered; the sequence is KPAGEADPYRDRGSVDEPSDAGGLVIRTSDGLEAENTGDDYQAED. Residues 162 to 175 are compositionally biased toward acidic residues; sequence LEAENTGDDYQAED.

It belongs to the RbfA family. As to quaternary structure, monomer. Binds 30S ribosomal subunits, but not 50S ribosomal subunits or 70S ribosomes.

It is found in the cytoplasm. In terms of biological role, one of several proteins that assist in the late maturation steps of the functional core of the 30S ribosomal subunit. Associates with free 30S ribosomal subunits (but not with 30S subunits that are part of 70S ribosomes or polysomes). Required for efficient processing of 16S rRNA. May interact with the 5'-terminal helix region of 16S rRNA. This chain is Ribosome-binding factor A, found in Mycobacterium ulcerans (strain Agy99).